We begin with the raw amino-acid sequence, 61 residues long: Photosystem II assembly protein Psb34 (61 aa).

Residues 36–56 form a helical membrane-spanning segment; the sequence is LIMAAITVVLVAGLIAVAVVA.

It belongs to the Psb34 family. Part of the photosystem II (PSII) assembly intermediate RC47 complex (with D1, D2, CP47, PsbE, PsbF, PsbH, Psb27 and Psb28); minor amounts are found in other PSII complexes, including mature, dimeric PSII with PsbO and PsbV. No HliA or HliB are detected in any of these complexes. Its interaction with PSII requires both CP47 (psbB) and PsbH. HliA/HliB and Psb34 probably bind to a similar site on CP47; their binding seems to be mutually exclusive.

It is found in the cellular thylakoid membrane. Functionally, involved in photosystem II (PSII) assembly and/or repair. Probably involved in conversion of late PSII assembly intermediates into mature dimeric PSII, it may mediate the optimal equlibrium of HliA/HliB among the intermediates containing CP47 (psbB) to facilitate photoprotection during assembly. The protein is Photosystem II assembly protein Psb34 of Synechocystis sp. (strain ATCC 27184 / PCC 6803 / Kazusa).